The sequence spans 558 residues: Solute carrier family 22 member 6-A (558 aa).

Residues 1 to 15 (MSFAELLERTGGMGR) are Cytoplasmic-facing. The helical transmembrane segment at 16–36 (FQITQVALMCFPILLMASHNL) threads the bilayer. Residues 37-140 (LQNFSAAIPD…LVCGHKNRRQ (104 aa)) are Extracellular-facing. The helical transmembrane segment at 141–161 (LAQSVYMGGVLVGAIILGGLS) threads the bilayer. The Cytoplasmic segment spans residues 162-167 (DRYGRR). A helical membrane pass occupies residues 168-188 (ALLIWSYFQMAVSGLCSAFSP). Residues 189–197 (NYLSYCIFR) lie on the Extracellular side of the membrane. A helical transmembrane segment spans residues 198-218 (FLTGMALSGIGLNTTALIVEW). Residues 219–225 (VPTRVRT) are Cytoplasmic-facing. A helical transmembrane segment spans residues 226 to 246 (ITGTLAGFSYTVGQLLLAGLA). Over 247 to 253 (YAMRDWR) the chain is Extracellular. The helical transmembrane segment at 254–274 (WLQLCVSLPFFIFFLYSWWFP) threads the bilayer. Residues 275 to 342 (ESARWLVLSG…DLIRTSTIRR (68 aa)) are Cytoplasmic-facing. Residues 343–363 (ISCALSLVWFSTSFAYYGLAM) traverse the membrane as a helical segment. Over 364–369 (DLQNFN) the chain is Extracellular. The chain crosses the membrane as a helical span at residues 370–390 (VSIYLIQVIFGAVDFPAKIFS). Residues 391–400 (TTAMIYVGRK) lie on the Cytoplasmic side of the membrane. Residues 401–421 (FTQLMSLILGGVVILANSFVP) traverse the membrane as a helical segment. The Extracellular segment spans residues 422–428 (HEMQTVR). A helical membrane pass occupies residues 429 to 449 (TGMAVFGKGCLAASFSCVFLY). Residues 450 to 462 (TTELYPTVIRQSG) lie on the Cytoplasmic side of the membrane. Residues 463–483 (LGLCSTMARIGGIVAPLVKIL) traverse the membrane as a helical segment. Topologically, residues 484–488 (GEYYP) are extracellular. The helical transmembrane segment at 489-509 (FLPLVIYGGAPIISGLCVFFL) threads the bilayer. Residues 510-558 (PETVNKPLPDTIEEVEKRIKAPKKENEMNEIVSLKKKEGMKENPVNDVL) lie on the Cytoplasmic side of the membrane. Residues 539-550 (EIVSLKKKEGMK) show a composition bias toward basic and acidic residues. Residues 539–558 (EIVSLKKKEGMKENPVNDVL) are disordered.

Belongs to the major facilitator (TC 2.A.1) superfamily. Organic cation transporter (TC 2.A.1.19) family. In terms of processing, glycosylated. Glycosylation is necessary for proper targeting of the transporter to the plasma membrane.

It is found in the cell membrane. It localises to the basolateral cell membrane. The protein localises to the basal cell membrane. In terms of biological role, involved in the renal elimination of endogenous and exogenous organic anions. Mediates the sodium-independent uptake of p-aminohippurate (PAH), 2,3-dimercapto-1-propanesulfonic acid (DMPS), cidofovir, adefovir, 9-(2-phosphonylmethoxyethyl) guanine (PMEG), 9-(2-phosphonylmethoxyethyl) diaminopurine (PMEDAP), ochratoxin (OTA), acyclovir (ACV), 3'-azido-3-'deoxythymidine (AZT), cimetidine (CMD), 2,4-dichloro-phenoxyacetate (2,4-D), hippurate (HA), indoleacetate (IA), indoxyl sulfate (IS) and 3-carboxy-4-methyl-5-propyl-2-furanpropionate (CMPF) and edaravone sulfate. PAH uptake is inhibited by p-chloromercuribenzenesulphonate (PCMBS), diethyl pyrocarbonate (DEPC), indomethacin, sulindac, diclofenac, carprofen, okadaic acid, benzothiazolylcysteine (BTC), S-chlorotrifluoroethylcysteine (CTFC), cysteine S-conjugates S-dichlorovinylcysteine (DCVC), furosemide, steviol, phorbol 12-myristate 13-acetate (PMA), calcium ionophore A23187, benzylpenicillin, bumetamide, losartan, probenecid, phenol red, urate, glutarate and alpha-ketoglutarate. The polypeptide is Solute carrier family 22 member 6-A (slc22a6-a) (Xenopus laevis (African clawed frog)).